The following is a 171-amino-acid chain: Peptidyl-prolyl cis-trans isomerase slr1251 (171 aa).

The 164-residue stretch at 6-169 (FFDITIGSDT…QAIVISDCGE (164 aa)) folds into the PPIase cyclophilin-type domain.

The protein belongs to the cyclophilin-type PPIase family.

It catalyses the reaction [protein]-peptidylproline (omega=180) = [protein]-peptidylproline (omega=0). PPIases accelerate the folding of proteins. It catalyzes the cis-trans isomerization of proline imidic peptide bonds in oligopeptides. The sequence is that of Peptidyl-prolyl cis-trans isomerase slr1251 from Synechocystis sp. (strain ATCC 27184 / PCC 6803 / Kazusa).